Consider the following 282-residue polypeptide: Succinate dehydrogenase [ubiquinone] iron-sulfur subunit, mitochondrial (282 aa).

Residues 1-30 (MAATVGVSLKRGFPAAVLGRVGLQFQACRG) constitute a mitochondrion transit peptide. The 2Fe-2S ferredoxin-type domain maps to 42 to 135 (KKFAIYRWDP…VSKIYPLPHM (94 aa)). An N6-acetyllysine mark is found at K53 and K57. [2Fe-2S] cluster-binding residues include C95, C100, C103, and C115. The tract at residues 148 to 220 (FYAQYKSIEP…PAVLMQAYRW (73 aa)) is interaction with SDHAF1. In terms of domain architecture, 4Fe-4S ferredoxin-type spans 178–208 (DREKLDGLYECILCACCSTSCPSYWWNGDKY). Residues C188, C191, and C194 each contribute to the [4Fe-4S] cluster site. C198 lines the [3Fe-4S] cluster pocket. W203 is a binding site for a ubiquinone. [3Fe-4S] cluster-binding residues include C245 and C251. C255 lines the [4Fe-4S] cluster pocket.

The protein belongs to the succinate dehydrogenase/fumarate reductase iron-sulfur protein family. As to quaternary structure, component of complex II composed of four subunits: the flavoprotein (FP) SDHA, iron-sulfur protein (IP) SDHB, and a cytochrome b560 composed of SDHC and SDHD. Interacts with SDHAF1; the interaction is required for iron-sulfur cluster incorporation into SDHB. [2Fe-2S] cluster is required as a cofactor. It depends on [3Fe-4S] cluster as a cofactor. Requires [4Fe-4S] cluster as cofactor.

It localises to the mitochondrion inner membrane. It catalyses the reaction a quinone + succinate = fumarate + a quinol. It carries out the reaction (R)-malate + a quinone = enol-oxaloacetate + a quinol. The enzyme catalyses (S)-malate + a quinone = enol-oxaloacetate + a quinol. It functions in the pathway carbohydrate metabolism; tricarboxylic acid cycle; fumarate from succinate (eukaryal route): step 1/1. Its activity is regulated as follows. Enol-oxaloacetate inhibits the succinate dehydrogenase activity. In terms of biological role, iron-sulfur protein (IP) subunit of the succinate dehydrogenase complex (mitochondrial respiratory chain complex II), responsible for transferring electrons from succinate to ubiquinone (coenzyme Q). SDH also oxidizes malate to the non-canonical enol form of oxaloacetate, enol-oxaloacetate. Enol-oxaloacetate, which is a potent inhibitor of the succinate dehydrogenase activity, is further isomerized into keto-oxaloacetate. The protein is Succinate dehydrogenase [ubiquinone] iron-sulfur subunit, mitochondrial (Sdhb) of Mus musculus (Mouse).